The chain runs to 957 residues: Glycine dehydrogenase (decarboxylating) (957 aa).

Position 708 is an N6-(pyridoxal phosphate)lysine (Lys-708).

It belongs to the GcvP family. As to quaternary structure, the glycine cleavage system is composed of four proteins: P, T, L and H. Pyridoxal 5'-phosphate is required as a cofactor.

The catalysed reaction is N(6)-[(R)-lipoyl]-L-lysyl-[glycine-cleavage complex H protein] + glycine + H(+) = N(6)-[(R)-S(8)-aminomethyldihydrolipoyl]-L-lysyl-[glycine-cleavage complex H protein] + CO2. In terms of biological role, the glycine cleavage system catalyzes the degradation of glycine. The P protein binds the alpha-amino group of glycine through its pyridoxal phosphate cofactor; CO(2) is released and the remaining methylamine moiety is then transferred to the lipoamide cofactor of the H protein. The sequence is that of Glycine dehydrogenase (decarboxylating) from Escherichia coli (strain SE11).